The following is a 490-amino-acid chain: ATP synthase subunit beta (490 aa).

Residue 175-182 coordinates ATP; that stretch reads GGAGVGKT.

This sequence belongs to the ATPase alpha/beta chains family. In terms of assembly, F-type ATPases have 2 components, CF(1) - the catalytic core - and CF(0) - the membrane proton channel. CF(1) has five subunits: alpha(3), beta(3), gamma(1), delta(1), epsilon(1). CF(0) has three main subunits: a(1), b(2) and c(9-12). The alpha and beta chains form an alternating ring which encloses part of the gamma chain. CF(1) is attached to CF(0) by a central stalk formed by the gamma and epsilon chains, while a peripheral stalk is formed by the delta and b chains.

It is found in the cell membrane. The enzyme catalyses ATP + H2O + 4 H(+)(in) = ADP + phosphate + 5 H(+)(out). Produces ATP from ADP in the presence of a proton gradient across the membrane. The catalytic sites are hosted primarily by the beta subunits. This Acidothermus cellulolyticus (strain ATCC 43068 / DSM 8971 / 11B) protein is ATP synthase subunit beta.